We begin with the raw amino-acid sequence, 456 residues long: Chromosomal replication initiator protein DnaA (456 aa).

Residues 1–83 (MTASLWQQCL…LRFDIGNRPH (83 aa)) form a domain I, interacts with DnaA modulators region. The tract at residues 83–119 (HPVAVARAPARGADPVNNSQKSWESKAEAKPEPNHKS) is domain II. The segment at 92–122 (ARGADPVNNSQKSWESKAEAKPEPNHKSNTN) is disordered. Positions 105–117 (WESKAEAKPEPNH) are enriched in basic and acidic residues. The segment at 120–336 (NTNVNYTFEN…GALNRVIANA (217 aa)) is domain III, AAA+ region. Residues glycine 164, glycine 166, lysine 167, and threonine 168 each coordinate ATP. Residues 337-456 (NFTGRAINID…YSNLIRTLSS (120 aa)) form a domain IV, binds dsDNA region.

It belongs to the DnaA family. As to quaternary structure, oligomerizes as a right-handed, spiral filament on DNA at oriC.

The protein resides in the cytoplasm. Functionally, plays an essential role in the initiation and regulation of chromosomal replication. ATP-DnaA binds to the origin of replication (oriC) to initiate formation of the DNA replication initiation complex once per cell cycle. Binds the DnaA box (a 9 base pair repeat at the origin) and separates the double-stranded (ds)DNA. Forms a right-handed helical filament on oriC DNA; dsDNA binds to the exterior of the filament while single-stranded (ss)DNA is stabiized in the filament's interior. The ATP-DnaA-oriC complex binds and stabilizes one strand of the AT-rich DNA unwinding element (DUE), permitting loading of DNA polymerase. After initiation quickly degrades to an ADP-DnaA complex that is not apt for DNA replication. Binds acidic phospholipids. The protein is Chromosomal replication initiator protein DnaA of Aeromonas hydrophila subsp. hydrophila (strain ATCC 7966 / DSM 30187 / BCRC 13018 / CCUG 14551 / JCM 1027 / KCTC 2358 / NCIMB 9240 / NCTC 8049).